Consider the following 227-residue polypeptide: Probable maleylacetoacetate isomerase 2 (227 aa).

Residues 14–97 (IQPILYSYWR…YLEETRPQRP (84 aa)) form the GST N-terminal domain. Glutathione is bound by residues 24–29 (SSCSWR), Gln55, Val69, 81–82 (ES), Gln121, and 125–127 (NLI). Residues 102–222 (DVHKRAKVRE…HPSNQPDCPP (121 aa)) enclose the GST C-terminal domain.

It belongs to the GST superfamily. Zeta family. It depends on glutathione as a cofactor.

It is found in the cytoplasm. The catalysed reaction is 4-maleylacetoacetate = 4-fumarylacetoacetate. It catalyses the reaction RX + glutathione = an S-substituted glutathione + a halide anion + H(+). It participates in amino-acid degradation; L-phenylalanine degradation; acetoacetate and fumarate from L-phenylalanine: step 5/6. In terms of biological role, catalyzes the glutathione dependent oxygenation of dichloroacetic acid to glyoxylic acid in vitro. Has no glutathione thioltransferase activity with 4-hydroxynonenal (4-HNE), adrenochrome, phenethyl isothiocyanate (PEITC), 5-hydroperoxyeicosatetraenoic acid ((5S)-HpETE), prostaglandin A2 (PGA2) or 2-hydroxyethyldisulfide (HED). In Drosophila melanogaster (Fruit fly), this protein is Probable maleylacetoacetate isomerase 2 (GstZ2).